A 380-amino-acid chain; its full sequence is Shaggy-related protein kinase eta (380 aa).

One can recognise a Protein kinase domain in the interval 40–324 (YMAERVVGTG…ALEACAHPFF (285 aa)). Residues 46–54 (VGTGSFGIV) and Lys-69 contribute to the ATP site. The residue at position 104 (Thr-104) is a Phosphothreonine. Ser-105 is subject to Phosphoserine. Asp-165 functions as the Proton acceptor in the catalytic mechanism. At Ser-187 the chain carries Phosphoserine. Position 200 is a phosphotyrosine (Tyr-200). Thr-220 and Thr-261 each carry phosphothreonine. Ser-310 carries the phosphoserine modification. Thr-314 bears the Phosphothreonine mark. Ser-353 is modified (phosphoserine).

It belongs to the protein kinase superfamily. CMGC Ser/Thr protein kinase family. GSK-3 subfamily. In terms of assembly, interacts in vitro with the C-terminal fragment of BZR1 and with BES1/BZR2, but not through the kinase domain. Interacts with BHLH150, beet curly top virus AL4/C4 and tomato golden mosaic virus AL4/AC4. Interacts with YDA. Interacts with MKK4. Interacts with KIB1 and KIB2 in a brassinosteroid (BR)-dependent manner. Interacts with BSK1, BSK6, BSK8 and BSK11. Binds to WRKY46, WRKY54 and WRKY70. Component of a complex made of POLAR, BASL, ASK7/BIN2 and ASK3/SK12. Binds to POLAR and BASL. Post-translationally, autophosphorylated mainly on threonine and serine residues. In terms of processing, ubiquitination and subsequent proteasomal degradation mediated by KIB1. As to expression, in the two outer cell layers of the developing seed coat and restricted to the suspensor cells in developing embryos. Mostly expressed in stomatal lineage cells with asymmetric cell division (ACD) potential. Observed in small cells of non-protruding hypocotyl cell files and of developing cotyledon epidermis.

It localises to the cytoplasm. The protein localises to the cell cortex. It is found in the nucleus. The protein resides in the cell membrane. The catalysed reaction is L-seryl-[protein] + ATP = O-phospho-L-seryl-[protein] + ADP + H(+). It catalyses the reaction L-threonyl-[protein] + ATP = O-phospho-L-threonyl-[protein] + ADP + H(+). Inactivated by an unknown mechanism after binding of brassinosteroids to the brassinosteroid receptor complex. Inhibited by lithium. Inhibited by dephosphorylation at Tyr-200 by BSU1. Competitive inhibition by KIB1 that reduces substrate (e.g. BZR1) access. Repressed by bikinin. In terms of biological role, negative regulator in brassinosteroid signal transduction pathway important for plant growth. May be also involved in auxin signaling pathway. Phosphorylates and increases the degradation of BZR1 and BZR2/BES1 by the proteasome. Phosphorylates BHLH150, beet curly top virus C4 and tomato golden mosaic virus AC4 on threonine and serine residues. Upon brassinosteroid signaling, inhibits stomatal development by phosphorylating and inhibiting the MAPKK kinase YDA and the MAPK kinases MKK4 and MKK5. Phosphorylates BSK1, BSK3, BSK5, BSK6, BSK8 and BSK11 in vitro. Phoyphorylates and destabilizes WRKY46, WRKY54 and WRKY70. Mediates BASL nuclear exclusion; kinase activity is required for this function. Required first at the cortical polarity site, to restrict MAPK signaling and promote asymmetric cell division (ACD), and second in the nucleus of stomatal lineage ground cells (SLGCs) or meristemoids, to limit cell division and to promote differentiation into pavement or stomatal guard cells, respectively, likely by initiating BASL polarization. Phosphorylates BASL, YDA and SPCH in vitro and POLAR in vivo. Phosphorylates and inhibits SPCH in the nucleus of SLGC undergoing ACD, thus negatively regulating stomatal development. In Arabidopsis thaliana (Mouse-ear cress), this protein is Shaggy-related protein kinase eta.